The following is a 264-amino-acid chain: Neurexophilin-2 (264 aa).

The signal sequence occupies residues 1 to 22 (MRLRPLPLVVVPGLLQLLFCDS). An II region spans residues 23-90 (EKVVHATEGL…WDWLANITEV (68 aa)). N-linked (GlcNAc...) asparagine glycosylation is found at Asn86, Asn139, Asn149, and Asn155. Positions 91-169 (QEPLARTKRR…LVPPSKVVEF (79 aa)) are III. Residues 170–178 (EVSPQSTLE) form an IV (linker domain) region. The v (Cys-rich) stretch occupies residues 179–264 (TKESKSFNCR…HSETPYLSSG (86 aa)).

It belongs to the neurexophilin family. In terms of processing, may be proteolytically processed at the boundary between the N-terminal non-conserved and the central conserved domain in neuron-like cells. Brain, only in a scattered subpopulation of neurons that probably represent inhibitory interneurons.

The protein localises to the secreted. May be signaling molecules that resemble neuropeptides and that act by binding to alpha-neurexins and possibly other receptors. The sequence is that of Neurexophilin-2 (NXPH2) from Bos taurus (Bovine).